The primary structure comprises 643 residues: Threonine--tRNA ligase (643 aa).

Residues 1 to 61 (MPIITLPDGA…SVNANINIIT (61 aa)) form the TGS domain. Residues 242 to 533 (DHRKIGKKLD…LIEEYEGKFP (292 aa)) are catalytic. Zn(2+)-binding residues include Cys-333, His-384, and His-510.

The protein belongs to the class-II aminoacyl-tRNA synthetase family. As to quaternary structure, homodimer. It depends on Zn(2+) as a cofactor.

The protein localises to the cytoplasm. The catalysed reaction is tRNA(Thr) + L-threonine + ATP = L-threonyl-tRNA(Thr) + AMP + diphosphate + H(+). Its function is as follows. Catalyzes the attachment of threonine to tRNA(Thr) in a two-step reaction: L-threonine is first activated by ATP to form Thr-AMP and then transferred to the acceptor end of tRNA(Thr). Also edits incorrectly charged L-seryl-tRNA(Thr). This chain is Threonine--tRNA ligase, found in Prochlorococcus marinus (strain SARG / CCMP1375 / SS120).